The primary structure comprises 340 residues: HPr kinase/phosphorylase (340 aa).

Catalysis depends on residues H153 and K174. 168–175 (GNSGLGKS) serves as a coordination point for ATP. Mg(2+) is bound at residue S175. The active-site Proton acceptor; for phosphorylation activity. Proton donor; for dephosphorylation activity is the D192. The tract at residues 216-225 (MEIRGLGVVD) is important for the catalytic mechanism of both phosphorylation and dephosphorylation. E217 is a Mg(2+) binding site. R258 is a catalytic residue. The tract at residues 279-284 (PINPGK) is important for the catalytic mechanism of dephosphorylation.

Belongs to the HPrK/P family. As to quaternary structure, homohexamer. Mg(2+) is required as a cofactor.

The enzyme catalyses [HPr protein]-L-serine + ATP = [HPr protein]-O-phospho-L-serine + ADP + H(+). It catalyses the reaction [HPr protein]-O-phospho-L-serine + phosphate + H(+) = [HPr protein]-L-serine + diphosphate. In terms of biological role, catalyzes the ATP- as well as the pyrophosphate-dependent phosphorylation of a specific serine residue in HPr, a phosphocarrier protein of the phosphoenolpyruvate-dependent sugar phosphotransferase system (PTS). HprK/P also catalyzes the pyrophosphate-producing, inorganic phosphate-dependent dephosphorylation (phosphorolysis) of seryl-phosphorylated HPr (P-Ser-HPr). The sequence is that of HPr kinase/phosphorylase from Prosthecochloris aestuarii (strain DSM 271 / SK 413).